Here is a 166-residue protein sequence, read N- to C-terminus: ATP synthase subunit b (166 aa).

Residues 10–30 (LLFWMVIVFGIVFVILAKYGF) form a helical membrane-spanning segment.

The protein belongs to the ATPase B chain family. As to quaternary structure, F-type ATPases have 2 components, F(1) - the catalytic core - and F(0) - the membrane proton channel. F(1) has five subunits: alpha(3), beta(3), gamma(1), delta(1), epsilon(1). F(0) has three main subunits: a(1), b(2) and c(10-14). The alpha and beta chains form an alternating ring which encloses part of the gamma chain. F(1) is attached to F(0) by a central stalk formed by the gamma and epsilon chains, while a peripheral stalk is formed by the delta and b chains.

Its subcellular location is the cell inner membrane. Functionally, f(1)F(0) ATP synthase produces ATP from ADP in the presence of a proton or sodium gradient. F-type ATPases consist of two structural domains, F(1) containing the extramembraneous catalytic core and F(0) containing the membrane proton channel, linked together by a central stalk and a peripheral stalk. During catalysis, ATP synthesis in the catalytic domain of F(1) is coupled via a rotary mechanism of the central stalk subunits to proton translocation. Its function is as follows. Component of the F(0) channel, it forms part of the peripheral stalk, linking F(1) to F(0). This chain is ATP synthase subunit b, found in Phocaeicola vulgatus (strain ATCC 8482 / DSM 1447 / JCM 5826 / CCUG 4940 / NBRC 14291 / NCTC 11154) (Bacteroides vulgatus).